The chain runs to 311 residues: Ribosomal RNA small subunit methyltransferase H (311 aa).

S-adenosyl-L-methionine is bound by residues 32–34, Asp52, Phe79, Asp100, and Gln107; that span reads AGH.

This sequence belongs to the methyltransferase superfamily. RsmH family.

It is found in the cytoplasm. The catalysed reaction is cytidine(1402) in 16S rRNA + S-adenosyl-L-methionine = N(4)-methylcytidine(1402) in 16S rRNA + S-adenosyl-L-homocysteine + H(+). Its function is as follows. Specifically methylates the N4 position of cytidine in position 1402 (C1402) of 16S rRNA. This Staphylococcus aureus (strain COL) protein is Ribosomal RNA small subunit methyltransferase H.